We begin with the raw amino-acid sequence, 34 residues long: Mu-theraphotoxin-Df1a (34 aa).

Cystine bridges form between C2-C16, C9-C21, and C15-C28. F34 is modified (phenylalanine amide).

The protein belongs to the neurotoxin 10 (Hwtx-1) family. 54 (ProTx-1) subfamily. In terms of processing, C-terminal amidation is important for the high potency of the toxin. As to expression, expressed by the venom gland.

Its subcellular location is the secreted. Inhibits sodium channel Nav1.7/SCN9A with high potency (IC(50)=117 nM) and Nav1.2/SCN2A, Nav1.3/SCN3A, Nav1.6/SCN8A and Nav1.5/SCN5 with weaker potency. Also inhibits voltage-gated calcium channel Cav3.1/CACNA1G, Cav3.2/CACNA1H and Cav3.3/CACNA1I. The chain is Mu-theraphotoxin-Df1a from Davus fasciatus (Costa Rican tiger rump).